A 253-amino-acid chain; its full sequence is Proproteinase E (253 aa).

The propeptide at 1–11 (FSQPFSRPSSR) is activation peptide. A Peptidase S1 domain is found at 12-251 (VVNGEDAVPY…FIDWIDETIA (240 aa)). 5 cysteine pairs are disulfide-bonded: Cys41/Cys57, Cys100/Cys103, Cys140/Cys206, Cys171/Cys187, and Cys196/Cys227.

This sequence belongs to the peptidase S1 family. As to quaternary structure, monomer. The zymogen is secreted as a ternary complex composed of procarboxypeptidase A, chymotrypsinogen C and proproteinase E. As to expression, pancreas.

It localises to the secreted. Its subcellular location is the extracellular space. May protect procarboxypeptidase A against denaturation in the acidic environment of the ruminant duodenum. The sequence is that of Proproteinase E from Bos taurus (Bovine).